Consider the following 198-residue polypeptide: Probable molybdenum cofactor guanylyltransferase (198 aa).

Residues 9–11, Lys22, Asp66, and Asp95 each bind GTP; that span reads LAG. Asp95 provides a ligand contact to Mg(2+).

This sequence belongs to the MobA family. Mg(2+) is required as a cofactor.

It is found in the cytoplasm. The catalysed reaction is Mo-molybdopterin + GTP + H(+) = Mo-molybdopterin guanine dinucleotide + diphosphate. Functionally, transfers a GMP moiety from GTP to Mo-molybdopterin (Mo-MPT) cofactor (Moco or molybdenum cofactor) to form Mo-molybdopterin guanine dinucleotide (Mo-MGD) cofactor. This Clostridium perfringens (strain SM101 / Type A) protein is Probable molybdenum cofactor guanylyltransferase.